The primary structure comprises 368 residues: Tetraacyldisaccharide 4'-kinase (368 aa).

66-73 (TVGGTGKT) is an ATP binding site.

It belongs to the LpxK family.

It catalyses the reaction a lipid A disaccharide + ATP = a lipid IVA + ADP + H(+). It participates in glycolipid biosynthesis; lipid IV(A) biosynthesis; lipid IV(A) from (3R)-3-hydroxytetradecanoyl-[acyl-carrier-protein] and UDP-N-acetyl-alpha-D-glucosamine: step 6/6. In terms of biological role, transfers the gamma-phosphate of ATP to the 4'-position of a tetraacyldisaccharide 1-phosphate intermediate (termed DS-1-P) to form tetraacyldisaccharide 1,4'-bis-phosphate (lipid IVA). In Desulfatibacillum aliphaticivorans, this protein is Tetraacyldisaccharide 4'-kinase.